The following is a 484-amino-acid chain: Probable metalloprotease ARX1 (484 aa).

The protein belongs to the peptidase M24 family. Component of the nucleoplasmic and cytoplasmic pre-60S ribosomal particles.

The protein resides in the cytoplasm. Its subcellular location is the nucleus. Functionally, probable metalloprotease involved in proper assembly of pre-ribosomal particles during the biogenesis of the 60S ribosomal subunit. Accompanies the pre-60S particles to the cytoplasm. The sequence is that of Probable metalloprotease ARX1 (ARX1) from Yarrowia lipolytica (strain CLIB 122 / E 150) (Yeast).